An 889-amino-acid polypeptide reads, in one-letter code: MAQPLVVKKDDDLDEEEYYSPFLGIEKGAVLQEARVFHDPQLDARRCCQVITKLLYLLNQGDTFTKVEATEVFFATTKLFQSKDAGLRRMVYLMIKELSPSADEVIIVTSSLMKDMNSKTDMYRANAIRVLCRIIDSTLLTQIERYLKQAIVDKNPVVASAALVSGIYLLQTSPEVVKRWSNEVQEAVQSRAALVQFHALALLHQIRQNDRLAVSKLVTSLTRGSVRSPLAQCLLIRYTSQVIRESSMNSQGGDRPFFDFLESCLRNKAEMVILEAARAITELNGVTSRELTPAITVLQLFLSSSKPVLRFAAVRTLNKVASTHPLAVTNCNIDMESLISDQNRSIATLAITTLLKTGNESSVDRLMKQMTNFMSDIADEFKIVVVEAIRSLCLKFPLKYRSLMNFLSNILREEGGFEYKKAIVDSIIILIRDIPDAKESGLFHLCEFIEDCEFTYMSTQILHFLGNEGPKTSDPSKYIRYIYNRVILENATVRASAVSTLAKFGALVDSLKPRIFVLLRRCLFDGDDEVRDRATLYLKLLGGEATVGETEKDVNEFLFGSFDIPLVNLETSLQNYEPSEAPFDISSVSLETKSQPLAEKKTTGKKPTGPASALSGPVPTVDASYEKLLSSIPEFAGFGKLFKSSAPVELTEAETEYSVNVVKHIYDGHVVLQYNCTNTIPEQLLEEVVVFVDASEADEFSEVATKSLRSLPYDSPGQTFVAFEKLEGVLATGKFSNILKFIVKEVDPSTGEADDDGVEDEYQLEDLEITSADYMLKVGVSNFRNAWESMDPESERVDEYGLGARESLAEAVSAVIGILGMQPCEGTDVVPSNSRSHTCLLSGVFIGNVKVLVRLSFGLSGPKEVAMKLAVRSDDPEISDKIHEIVANG.

HEAT repeat units follow at residues 67-102 (VEATEVFFATTKLFQSKDAGLRRMVYLMIKELSPSA), 103-140 (DEVIIVTSSLMKDMNSKTDMYRANAIRVLCRIIDSTLL), 289-326 (RELTPAITVLQLFLSSSKPVLRFAAVRTLNKVASTHPL), 328-360 (VTNCNIDMESLISDQNRSIATLAITTLLKTGNE), and 361-398 (SSVDRLMKQMTNFMSDIADEFKIVVVEAIRSLCLKFPL). The disordered stretch occupies residues 596-617 (PLAEKKTTGKKPTGPASALSGP).

This sequence belongs to the COPG family. As to quaternary structure, oligomeric complex that consists of at least the alpha, beta, beta', gamma, delta, epsilon and zeta subunits.

Its subcellular location is the cytoplasm. The protein resides in the golgi apparatus membrane. The protein localises to the cytoplasmic vesicle. It localises to the COPI-coated vesicle membrane. Its function is as follows. The coatomer is a cytosolic protein complex that binds to dilysine motifs and reversibly associates with Golgi non-clathrin-coated vesicles, which further mediate biosynthetic protein transport from the ER, via the Golgi up to the trans Golgi network. Coatomer complex is required for budding from Golgi membranes, and is essential for the retrograde Golgi-to-ER transport of dilysine-tagged proteins. In Oryza sativa subsp. japonica (Rice), this protein is Coatomer subunit gamma-2.